Here is a 458-residue protein sequence, read N- to C-terminus: Protein unc-93 homolog A (458 aa).

Transmembrane regions (helical) follow at residues 8–28 (VLVV…LQNL), 42–62 (TLST…PILI), 69–89 (WTIV…FHAN), 90–110 (WYTL…LWSA), and 140–160 (IFFL…SLVF). A glycan (N-linked (GlcNAc...) asparagine) is linked at asparagine 190. 7 helical membrane passes run 202–222 (TLLG…AVFL), 258–275 (LCLL…QEFL), 286–306 (CALG…MTAL), 321–341 (AALY…FLLW), 345–365 (TNQL…DAVW), 390–410 (LGEA…CVST), and 412–432 (LYIL…VEYL).

It belongs to the unc-93 family.

The protein localises to the cell membrane. The chain is Protein unc-93 homolog A (Unc93a) from Mus musculus (Mouse).